The sequence spans 399 residues: S-adenosylmethionine synthase (399 aa).

An ATP-binding site is contributed by H16. D18 serves as a coordination point for Mg(2+). K(+) is bound at residue E44. E57 and Q100 together coordinate L-methionine. The tract at residues 100 to 110 (QSPDIAQGVDT) is flexible loop. Residues 175–177 (DGK), 246–247 (KF), D255, 261–262 (RK), A278, and K282 each bind ATP. Residue D255 coordinates L-methionine. K286 is a binding site for L-methionine. An Isoglutamyl lysine isopeptide (Lys-Gln) (interchain with Q-Cter in protein Pup) cross-link involves residue K341.

Belongs to the AdoMet synthase family. Homotetramer; dimer of dimers. Requires Mg(2+) as cofactor. K(+) is required as a cofactor.

It is found in the cytoplasm. The catalysed reaction is L-methionine + ATP + H2O = S-adenosyl-L-methionine + phosphate + diphosphate. The protein operates within amino-acid biosynthesis; S-adenosyl-L-methionine biosynthesis; S-adenosyl-L-methionine from L-methionine: step 1/1. In terms of biological role, catalyzes the formation of S-adenosylmethionine (AdoMet) from methionine and ATP. The overall synthetic reaction is composed of two sequential steps, AdoMet formation and the subsequent tripolyphosphate hydrolysis which occurs prior to release of AdoMet from the enzyme. The sequence is that of S-adenosylmethionine synthase from Mycolicibacterium smegmatis (strain ATCC 700084 / mc(2)155) (Mycobacterium smegmatis).